A 198-amino-acid polypeptide reads, in one-letter code: Large ribosomal subunit protein bL21 (198 aa).

Belongs to the bacterial ribosomal protein bL21 family. Part of the 50S ribosomal subunit. Contacts protein L20.

Its function is as follows. This protein binds to 23S rRNA in the presence of protein L20. The sequence is that of Large ribosomal subunit protein bL21 from Ruegeria sp. (strain TM1040) (Silicibacter sp.).